A 527-amino-acid polypeptide reads, in one-letter code: Peptide chain release factor 3 (527 aa).

The region spanning 10–278 is the tr-type G domain; the sequence is DKRRTFAIIS…AFIEYAPAPL (269 aa). GTP contacts are provided by residues 19–26, 87–91, and 141–144; these read SHPDAGKT, DTPGH, and NKLD.

This sequence belongs to the TRAFAC class translation factor GTPase superfamily. Classic translation factor GTPase family. PrfC subfamily.

Its subcellular location is the cytoplasm. Its function is as follows. Increases the formation of ribosomal termination complexes and stimulates activities of RF-1 and RF-2. It binds guanine nucleotides and has strong preference for UGA stop codons. It may interact directly with the ribosome. The stimulation of RF-1 and RF-2 is significantly reduced by GTP and GDP, but not by GMP. In Pelobacter propionicus (strain DSM 2379 / NBRC 103807 / OttBd1), this protein is Peptide chain release factor 3.